Here is a 224-residue protein sequence, read N- to C-terminus: Small ribosomal subunit protein uS3 (224 aa).

Positions 20-89 constitute a KH type-2 domain; that stretch reads LDEFLANYFK…NVNITVSPVP (70 aa).

It belongs to the universal ribosomal protein uS3 family. In terms of assembly, part of the 30S ribosomal subunit.

Functionally, binds the lower part of the 30S subunit head. In Staphylothermus marinus (strain ATCC 43588 / DSM 3639 / JCM 9404 / F1), this protein is Small ribosomal subunit protein uS3.